The primary structure comprises 330 residues: tRNA-modifying protein YgfZ (330 aa).

Trp28 and Trp190 together coordinate folate.

This sequence belongs to the tRNA-modifying YgfZ family.

It localises to the cytoplasm. In terms of biological role, folate-binding protein involved in regulating the level of ATP-DnaA and in the modification of some tRNAs. It is probably a key factor in regulatory networks that act via tRNA modification, such as initiation of chromosomal replication. This chain is tRNA-modifying protein YgfZ, found in Yersinia enterocolitica serotype O:8 / biotype 1B (strain NCTC 13174 / 8081).